Consider the following 146-residue polypeptide: Large ribosomal subunit protein uL15 (146 aa).

A disordered region spans residues 1 to 51 (MKLHELQPAAGSRKVRNRVGRGTSSGNGKTAGRGQKGQKARSGGGVRLGFE). Composition is skewed to gly residues over residues 23 to 35 (TSSG…GRGQ) and 42 to 51 (SGGGVRLGFE).

It belongs to the universal ribosomal protein uL15 family. As to quaternary structure, part of the 50S ribosomal subunit.

Its function is as follows. Binds to the 23S rRNA. This is Large ribosomal subunit protein uL15 from Streptococcus gordonii (strain Challis / ATCC 35105 / BCRC 15272 / CH1 / DL1 / V288).